The sequence spans 513 residues: ATP synthase subunit beta (513 aa).

The tract at residues 1 to 29 is disordered; it reads MATAPATEKKAPAKKAAAPKAAAPKKAAA. Residues 14-29 show a composition bias toward low complexity; that stretch reads KKAAAPKAAAPKKAAA. 186–193 is an ATP binding site; the sequence is GGAGVGKT.

It belongs to the ATPase alpha/beta chains family. As to quaternary structure, F-type ATPases have 2 components, CF(1) - the catalytic core - and CF(0) - the membrane proton channel. CF(1) has five subunits: alpha(3), beta(3), gamma(1), delta(1), epsilon(1). CF(0) has three main subunits: a(1), b(2) and c(9-12). The alpha and beta chains form an alternating ring which encloses part of the gamma chain. CF(1) is attached to CF(0) by a central stalk formed by the gamma and epsilon chains, while a peripheral stalk is formed by the delta and b chains.

It localises to the cell inner membrane. The catalysed reaction is ATP + H2O + 4 H(+)(in) = ADP + phosphate + 5 H(+)(out). Produces ATP from ADP in the presence of a proton gradient across the membrane. The catalytic sites are hosted primarily by the beta subunits. The protein is ATP synthase subunit beta of Sphingopyxis alaskensis (strain DSM 13593 / LMG 18877 / RB2256) (Sphingomonas alaskensis).